The sequence spans 113 residues: Nascent polypeptide-associated complex protein (113 aa).

Positions 5-73 constitute an NAC-A/B domain; the sequence is GMNPAKMKQM…AKEVPKSLEI (69 aa).

The protein belongs to the NAC-alpha family. In terms of assembly, homodimer. Interacts with the ribosome. Binds ribosomal RNA.

Its function is as follows. Contacts the emerging nascent chain on the ribosome. The chain is Nascent polypeptide-associated complex protein from Methanosarcina acetivorans (strain ATCC 35395 / DSM 2834 / JCM 12185 / C2A).